The chain runs to 249 residues: Aspartate/glutamate leucyltransferase (249 aa).

The protein belongs to the R-transferase family. Bpt subfamily.

The protein localises to the cytoplasm. The enzyme catalyses N-terminal L-glutamyl-[protein] + L-leucyl-tRNA(Leu) = N-terminal L-leucyl-L-glutamyl-[protein] + tRNA(Leu) + H(+). The catalysed reaction is N-terminal L-aspartyl-[protein] + L-leucyl-tRNA(Leu) = N-terminal L-leucyl-L-aspartyl-[protein] + tRNA(Leu) + H(+). Functionally, functions in the N-end rule pathway of protein degradation where it conjugates Leu from its aminoacyl-tRNA to the N-termini of proteins containing an N-terminal aspartate or glutamate. The chain is Aspartate/glutamate leucyltransferase from Brucella abortus (strain 2308).